The chain runs to 215 residues: 3-demethoxyubiquinol 3-hydroxylase (215 aa).

Glutamate 64, glutamate 94, histidine 97, glutamate 146, glutamate 178, and histidine 181 together coordinate Fe cation.

It belongs to the COQ7 family. The cofactor is Fe cation.

It is found in the cell membrane. The catalysed reaction is a 5-methoxy-2-methyl-3-(all-trans-polyprenyl)benzene-1,4-diol + AH2 + O2 = a 3-demethylubiquinol + A + H2O. The protein operates within cofactor biosynthesis; ubiquinone biosynthesis. Functionally, catalyzes the hydroxylation of 2-nonaprenyl-3-methyl-6-methoxy-1,4-benzoquinol during ubiquinone biosynthesis. In Azotobacter vinelandii (strain DJ / ATCC BAA-1303), this protein is 3-demethoxyubiquinol 3-hydroxylase.